A 336-amino-acid polypeptide reads, in one-letter code: Sodium/bile acid cotransporter 7 (336 aa).

Residues 1–10 (MGLIARVRKE) lie on the Cytoplasmic side of the membrane. The helical transmembrane segment at 11-31 (WFIIGIVLVITFAKLQPSVGV) threads the bilayer. Over 32-37 (KGGPLH) the chain is Extracellular. Residues 38–58 (PEITITYVAVSVIFFNSGLSL) form a helical membrane-spanning segment. Residues 59 to 71 (KTEELASALMHVK) lie on the Cytoplasmic side of the membrane. A helical transmembrane segment spans residues 72 to 92 (LHFFVQTFTLVFFPIAIWLLL). At 93–116 (KVLALTAINEWLLRGLQTVACMPP) the chain is on the extracellular side. The chain crosses the membrane as a helical span at residues 117-137 (PVSSAVILTKAVGGNEAAAIF). Residue Asn138 is a topological domain, cytoplasmic. The chain crosses the membrane as a helical span at residues 139 to 159 (SAFGSFLGIVVTPLLLLVFLG). At 160–163 (SSSS) the chain is on the extracellular side. Residues 164 to 184 (VPFTSIFSQLFMTVVVPLIVG) traverse the membrane as a helical segment. The Cytoplasmic segment spans residues 185-201 (QVCRRFLRECLDRRKPP). The chain crosses the membrane as a helical span at residues 202-222 (FGAVSSVVLLMIIYSTFCDTF). The Extracellular segment spans residues 223–233 (NNPNIELDHLS). A helical membrane pass occupies residues 234 to 254 (LLTVVFIIFSIQLSFMALIFF). The Cytoplasmic segment spans residues 255 to 270 (LSTRKSSGFSAADSVA). A helical membrane pass occupies residues 271 to 291 (IMFCATHKSLTLGIPMLKIVF). At 292–298 (EGYEHLS) the chain is on the extracellular side. A helical transmembrane segment spans residues 299 to 319 (LISVPLLIYHPAQILLGSVLL). Topologically, residues 320-336 (PSIKTWMSGRQKTLTPI) are cytoplasmic.

It belongs to the bile acid:sodium symporter (BASS) (TC 2.A.28) family.

Its subcellular location is the cell membrane. The protein localises to the endoplasmic reticulum membrane. It localises to the golgi apparatus membrane. Involved in teeth and skeletal development. Has an essential role in the biosynthesis and trafficking of glycosaminoglycans and glycoproteins to produce a proper functioning extracellular matrix. Required for extracellular matrix mineralization. Also involved in the regulation of cellular calcium homeostasis. Does not show transport activity towards bile acids or steroid sulfates. The protein is Sodium/bile acid cotransporter 7 (slc10a7) of Danio rerio (Zebrafish).